The chain runs to 271 residues: Urease accessory protein UreD (271 aa).

It belongs to the UreD family. UreD, UreF and UreG form a complex that acts as a GTP-hydrolysis-dependent molecular chaperone, activating the urease apoprotein by helping to assemble the nickel containing metallocenter of UreC. The UreE protein probably delivers the nickel.

It is found in the cytoplasm. In terms of biological role, required for maturation of urease via the functional incorporation of the urease nickel metallocenter. This is Urease accessory protein UreD from Actinomyces naeslundii.